Reading from the N-terminus, the 315-residue chain is Aspartate carbamoyltransferase catalytic subunit (315 aa).

Carbamoyl phosphate is bound by residues R54 and T55. Residue K82 participates in L-aspartate binding. Residues R104, H134, and Q137 each contribute to the carbamoyl phosphate site. L-aspartate contacts are provided by R174 and R229. G270 and P271 together coordinate carbamoyl phosphate.

The protein belongs to the aspartate/ornithine carbamoyltransferase superfamily. ATCase family. In terms of assembly, heterododecamer (2C3:3R2) of six catalytic PyrB chains organized as two trimers (C3), and six regulatory PyrI chains organized as three dimers (R2).

The catalysed reaction is carbamoyl phosphate + L-aspartate = N-carbamoyl-L-aspartate + phosphate + H(+). Its pathway is pyrimidine metabolism; UMP biosynthesis via de novo pathway; (S)-dihydroorotate from bicarbonate: step 2/3. Catalyzes the condensation of carbamoyl phosphate and aspartate to form carbamoyl aspartate and inorganic phosphate, the committed step in the de novo pyrimidine nucleotide biosynthesis pathway. This is Aspartate carbamoyltransferase catalytic subunit from Leifsonia xyli subsp. xyli (strain CTCB07).